The following is a 282-amino-acid chain: 2-dehydro-3-deoxyphosphooctonate aldolase (282 aa).

This sequence belongs to the KdsA family.

The protein localises to the cytoplasm. The catalysed reaction is D-arabinose 5-phosphate + phosphoenolpyruvate + H2O = 3-deoxy-alpha-D-manno-2-octulosonate-8-phosphate + phosphate. The protein operates within carbohydrate biosynthesis; 3-deoxy-D-manno-octulosonate biosynthesis; 3-deoxy-D-manno-octulosonate from D-ribulose 5-phosphate: step 2/3. Its pathway is bacterial outer membrane biogenesis; lipopolysaccharide biosynthesis. This Bordetella avium (strain 197N) protein is 2-dehydro-3-deoxyphosphooctonate aldolase.